A 352-amino-acid polypeptide reads, in one-letter code: MKKIVFTGGGTVGHVTLNLLLMPKFIEDGWEVHYIGDKRGIEHQEILKSGLDVTFHSIATGKLRRYFSWQNMLDVFKVCWGIVQSLFIMLRLRPQTLFSKGGFVSVPPVIAARVSGVPVFIHESDLSMGLANKIAYKFATKMYSTFEQASSLSKVEHVGAVTKVSDQKNPEPDELVDIQSHFNHKLPTVLFVGGSAGARVFNQLVTDHKKELTERYNIINLTGDSSLNELSQNLFRVDYVTDLYQPLMELADIVVTRGGANTIFELLAIAKLHVIVPLGREASRGDQLENAAYFVKKGYAEDLQESDLTLDSLEEKLSHLLSHKEDYQAKMKASKELKSLADFYQLLKKDLS.

The UDP-N-acetyl-alpha-D-glucosamine site is built by Ser195 and Gln287.

It belongs to the glycosyltransferase 28 family. MurG subfamily.

It is found in the cell membrane. The catalysed reaction is Mur2Ac(oyl-L-Ala-gamma-D-Glu-L-Lys-D-Ala-D-Ala)-di-trans,octa-cis-undecaprenyl diphosphate + UDP-N-acetyl-alpha-D-glucosamine = beta-D-GlcNAc-(1-&gt;4)-Mur2Ac(oyl-L-Ala-gamma-D-Glu-L-Lys-D-Ala-D-Ala)-di-trans,octa-cis-undecaprenyl diphosphate + UDP + H(+). Its pathway is cell wall biogenesis; peptidoglycan biosynthesis. Its function is as follows. Cell wall formation. Catalyzes the transfer of a GlcNAc subunit on undecaprenyl-pyrophosphoryl-MurNAc-pentapeptide (lipid intermediate I) to form undecaprenyl-pyrophosphoryl-MurNAc-(pentapeptide)GlcNAc (lipid intermediate II). This Streptococcus pneumoniae serotype 19F (strain G54) protein is UDP-N-acetylglucosamine--N-acetylmuramyl-(pentapeptide) pyrophosphoryl-undecaprenol N-acetylglucosamine transferase.